A 65-amino-acid polypeptide reads, in one-letter code: Large ribosomal subunit protein uL29 (65 aa).

Belongs to the universal ribosomal protein uL29 family.

The chain is Large ribosomal subunit protein uL29 from Desulforapulum autotrophicum (strain ATCC 43914 / DSM 3382 / VKM B-1955 / HRM2) (Desulfobacterium autotrophicum).